The sequence spans 418 residues: Deoxyribonuclease Tat-D (418 aa).

A divalent metal cation contacts are provided by Glu185, His226, His277, and Asp327.

It belongs to the metallo-dependent hydrolases superfamily. TatD-type hydrolase family. It depends on Mg(2+) as a cofactor.

Its subcellular location is the cytoplasm. In terms of biological role, has both endo- and exonuclease activities. Incises double-stranded DNA without obvious specificity via its endonuclease activity and excises the DNA from the 3'-to 5'-end by its exonuclease activity. May have a role in apoptosis. In Saccharomyces cerevisiae (strain ATCC 204508 / S288c) (Baker's yeast), this protein is Deoxyribonuclease Tat-D.